Here is a 153-residue protein sequence, read N- to C-terminus: Ribonuclease H (153 aa).

The region spanning 4 to 146 (NNEIVEIYTD…CDRLATEQIK (143 aa)) is the RNase H type-1 domain. 4 residues coordinate Mg(2+): aspartate 13, glutamate 51, aspartate 73, and aspartate 138.

The protein belongs to the RNase H family. As to quaternary structure, monomer. It depends on Mg(2+) as a cofactor.

The protein localises to the cytoplasm. It carries out the reaction Endonucleolytic cleavage to 5'-phosphomonoester.. Its function is as follows. Endonuclease that specifically degrades the RNA of RNA-DNA hybrids. The chain is Ribonuclease H from Caldanaerobacter subterraneus subsp. tengcongensis (strain DSM 15242 / JCM 11007 / NBRC 100824 / MB4) (Thermoanaerobacter tengcongensis).